The sequence spans 276 residues: Digeranylgeranylglyceryl phosphate synthase (276 aa).

The next 7 helical transmembrane spans lie at 14–34, 40–60, 92–112, 146–166, 202–222, 224–244, and 256–276; these read NCILAGIVGLLGSIVALGHFP, LLIFLVVTVGCAGGNTINDYF, FAVGLALAYMINIYAFILGVI, GAVAVEHLGLAGYLAICAFLV, VGVLFALLTVIASFLPVKASV, VGYYAMVPVDLLILYAAYLIL, and QKLLKMSIFLAVMAFLIAAIV.

The protein belongs to the UbiA prenyltransferase family. DGGGP synthase subfamily. Mg(2+) serves as cofactor.

Its subcellular location is the cell membrane. It carries out the reaction sn-3-O-(geranylgeranyl)glycerol 1-phosphate + (2E,6E,10E)-geranylgeranyl diphosphate = 2,3-bis-O-(geranylgeranyl)-sn-glycerol 1-phosphate + diphosphate. The protein operates within membrane lipid metabolism; glycerophospholipid metabolism. Its function is as follows. Prenyltransferase that catalyzes the transfer of the geranylgeranyl moiety of geranylgeranyl diphosphate (GGPP) to the C2 hydroxyl of (S)-3-O-geranylgeranylglyceryl phosphate (GGGP). This reaction is the second ether-bond-formation step in the biosynthesis of archaeal membrane lipids. This is Digeranylgeranylglyceryl phosphate synthase from Thermococcus onnurineus (strain NA1).